The primary structure comprises 594 residues: UvrABC system protein C (594 aa).

Residues 17–94 (LEPGCYLMKD…IKQYQPRYNI (78 aa)) form the GIY-YIG domain. The UVR domain occupies 199–234 (KTILHHLEDRMNKASEQLDFEQAKEYRDMIQHIHNL).

The protein belongs to the UvrC family. As to quaternary structure, interacts with UvrB in an incision complex.

The protein localises to the cytoplasm. Its function is as follows. The UvrABC repair system catalyzes the recognition and processing of DNA lesions. UvrC both incises the 5' and 3' sides of the lesion. The N-terminal half is responsible for the 3' incision and the C-terminal half is responsible for the 5' incision. This chain is UvrABC system protein C, found in Staphylococcus epidermidis (strain ATCC 12228 / FDA PCI 1200).